A 494-amino-acid polypeptide reads, in one-letter code: uncharacterized protein (494 aa).

Positions 4–82 (FTITVKKTEG…NMIIEPLEGF (79 aa)) constitute a 2Fe-2S ferredoxin-type domain. [2Fe-2S] cluster is bound by residues C46, C51, C54, and C66. 2 4Fe-4S ferredoxin-type domains span residues 127–157 (DLKDVKKIRGCIDCLSCIAMCPARKYSNYPG) and 178–208 (EKEAFDENIYNCTTCGRCVEVCPKEIDIVHN). Positions 137, 140, 143, 147, 189, 192, 195, and 199 each coordinate [4Fe-4S] cluster.

It belongs to the succinate dehydrogenase/fumarate reductase iron-sulfur protein family.

This is an uncharacterized protein from Methanococcus maripaludis (strain DSM 14266 / JCM 13030 / NBRC 101832 / S2 / LL).